Here is a 184-residue protein sequence, read N- to C-terminus: Protein C8 (184 aa).

The first 21 residues, 1 to 21, serve as a signal peptide directing secretion; the sequence is MSSIRFIACLYLISIFGNCHE.

The protein belongs to the poxviridae C8 protein family.

The sequence is that of Protein C8 from Vaccinia virus (strain Copenhagen) (VACV).